The primary structure comprises 201 residues: Outer-membrane lipoprotein carrier protein (201 aa).

The N-terminal stretch at 1–21 is a signal peptide; it reads MKKVLLTVCAIALFGSQAAWA.

It belongs to the LolA family. In terms of assembly, monomer.

The protein localises to the periplasm. Participates in the translocation of lipoproteins from the inner membrane to the outer membrane. Only forms a complex with a lipoprotein if the residue after the N-terminal Cys is not an aspartate (The Asp acts as a targeting signal to indicate that the lipoprotein should stay in the inner membrane). The chain is Outer-membrane lipoprotein carrier protein from Proteus mirabilis (strain HI4320).